Reading from the N-terminus, the 371-residue chain is tRNA-specific 2-thiouridylase MnmA (371 aa).

Residues 24–31 and leucine 50 each bind ATP; that span reads AMSGGVDS. The active-site Nucleophile is cysteine 119. Cysteine 119 and cysteine 215 form a disulfide bridge. Position 143 (glycine 143) interacts with ATP. The interaction with tRNA stretch occupies residues 165–167; it reads KDQ. The active-site Cysteine persulfide intermediate is the cysteine 215.

It belongs to the MnmA/TRMU family.

It is found in the cytoplasm. It catalyses the reaction S-sulfanyl-L-cysteinyl-[protein] + uridine(34) in tRNA + AH2 + ATP = 2-thiouridine(34) in tRNA + L-cysteinyl-[protein] + A + AMP + diphosphate + H(+). In terms of biological role, catalyzes the 2-thiolation of uridine at the wobble position (U34) of tRNA, leading to the formation of s(2)U34. This is tRNA-specific 2-thiouridylase MnmA from Neorickettsia sennetsu (strain ATCC VR-367 / Miyayama) (Ehrlichia sennetsu).